The following is a 426-amino-acid chain: UPF0761 membrane protein Nmul_A0452 (426 aa).

A run of 6 helical transmembrane segments spans residues 48 to 68 (LLSL…FPAF), 106 to 126 (LTAI…LTID), 145 to 165 (LLIY…SLSL), 187 to 207 (LLRL…YLIV), 217 to 237 (AIAG…GFAF), and 255 to 275 (IPIF…GAVI).

This sequence belongs to the UPF0761 family.

It localises to the cell inner membrane. This is UPF0761 membrane protein Nmul_A0452 from Nitrosospira multiformis (strain ATCC 25196 / NCIMB 11849 / C 71).